The primary structure comprises 295 residues: N-acetylmuramic acid 6-phosphate etherase (295 aa).

One can recognise an SIS domain in the interval 53 to 216 (AIQRFNNGGR…STMTMIGVGK (164 aa)). Glutamate 81 serves as the catalytic Proton donor. Residue glutamate 112 is part of the active site.

Belongs to the GCKR-like family. MurNAc-6-P etherase subfamily. Homodimer.

The catalysed reaction is N-acetyl-D-muramate 6-phosphate + H2O = N-acetyl-D-glucosamine 6-phosphate + (R)-lactate. It functions in the pathway amino-sugar metabolism; N-acetylmuramate degradation. Its function is as follows. Specifically catalyzes the cleavage of the D-lactyl ether substituent of MurNAc 6-phosphate, producing GlcNAc 6-phosphate and D-lactate. In Staphylococcus epidermidis (strain ATCC 35984 / DSM 28319 / BCRC 17069 / CCUG 31568 / BM 3577 / RP62A), this protein is N-acetylmuramic acid 6-phosphate etherase.